The chain runs to 656 residues: MESPFSPVLPHGPGEDWESTLFAELGYFTDTDDVQFDAAHETYENNFDHLNFDLDLMPWESDIWSPSSHFCSDIKAEPQPLSPASSSCSVSSPRSTDSCSSTQHVPEELDLLSSSQSPLSLYGDSCHSPSSAEPLKEEKPVTGPGNKTEHGLTPKKKIQMSSKPSVQPKPLLLPAAPKTPANASVPAKTIIIQTLPALMPLAKQQSIISIQPAPTKGQTVLLSQPAVVQLQTPGVLPSAQPVLAVTGGATQLPNHVVNVVPAPVVNSPVNGKLCVTKPVLQSSTRSTGSDIAVLRRQQRMIKNRESACQSRKKKKEYMLGLEARLKAALSENEQLKKENGSLKRQLDQVVSENQRLKVPSPKRRAVCVMIVLAFIMLNYGPMSMLEQDSRRVKPSVSPANQRRHLLEFSAKEVKDTSDGDNQKNSYRYDHSVSNDKALMVLSEEPLLYIPPPPCQPLINTTESLRLNHELRGWVHRHEVERTKSRRMTNSQQKTRILQGALEQGSNSQLMAVQYTETTSISRNSGSELQVYYASPGSYQGFFDAIRRRGDTFYVVSFRRDHLLLPATTHNKTTRPKMSIVLPAININDNVINGQDYEVMMQIDCQVMDTRILHIKSSSVPPYLRDHQRNQTSTFFGSPPTATETTHVVSTLPESVQ.

The transcription activation stretch occupies residues 1–137 (MESPFSPVLP…SPSSAEPLKE (137 aa)). Lys75 participates in a covalent cross-link: Glycyl lysine isopeptide (Lys-Gly) (interchain with G-Cter in SUMO2). 2 stretches are compositionally biased toward low complexity: residues 81 to 101 (LSPA…SCSS) and 111 to 121 (LLSSSQSPLSL). The tract at residues 81–171 (LSPASSSCSV…SKPSVQPKPL (91 aa)) is disordered. Lys139 is covalently cross-linked (Glycyl lysine isopeptide (Lys-Gly) (interchain with G-Cter in ubiquitin)). Positions 293 to 356 (VLRRQQRMIK…DQVVSENQRL (64 aa)) constitute a bZIP domain. Residues 295-326 (RRQQRMIKNRESACQSRKKKKEYMLGLEARLK) are basic motif. The interval 335–342 (LKKENGSL) is leucine-zipper. The helical; Signal-anchor for type II membrane protein transmembrane segment at 378–398 (NYGPMSMLEQDSRRVKPSVSP) threads the bilayer. The Lumenal segment spans residues 399-656 (ANQRRHLLEF…VVSTLPESVQ (258 aa)). Residues 455–575 (QPLINTTESL…ATTHNKTTRP (121 aa)) form an interaction with THBS4 region. N-linked (GlcNAc...) asparagine glycosylation is found at Asn459, Asn570, and Asn629. A disordered region spans residues 632–656 (STFFGSPPTATETTHVVSTLPESVQ).

Belongs to the bZIP family. ATF subfamily. As to quaternary structure, interacts with XBP1 isoform 2; the interaction occurs in a ER stress-dependent manner. Interacts with LACC1. In terms of assembly, interacts with THBS4 (via EGF-like 3; calcium-binding domain) which facilitates its processing, activation and nuclear translocation. Interacts (via lumenal domain) with THBS1. Homodimer and heterodimer with ATF6-beta. The dimer interacts with the nuclear transcription factor Y (NF-Y) trimer through direct binding to NF-Y subunit C (NF-YC). Also interacts with the transcription factors GTF2I, YY1 and SRF. Post-translationally, during unfolded protein response, a fragment of approximately 50 kDa containing the cytoplasmic transcription factor domain is released by proteolysis. The cleavage seems to be performed sequentially by site-1 (MBTPS1, S1P) and site-2 (MBTPS2, S2P) proteases. N-glycosylated; in its luminal domain. The glycosylation status may serve as a sensor for ER homeostasis, resulting in ATF6 activation to trigger the unfolded protein response (UPR). In terms of processing, ubiquitinated by RNF186 at Lys-139, which is required for pattern recognition receptor-induced unfolded protein response-associated outcomes.

It localises to the endoplasmic reticulum membrane. The protein localises to the golgi apparatus membrane. Its subcellular location is the nucleus. Its function is as follows. Precursor of the transcription factor form (Processed cyclic AMP-dependent transcription factor ATF-6 alpha), which is embedded in the endoplasmic reticulum membrane. Endoplasmic reticulum stress promotes processing of this form, releasing the transcription factor form that translocates into the nucleus, where it activates transcription of genes involved in the unfolded protein response (UPR). Transcription factor that initiates the unfolded protein response (UPR) during endoplasmic reticulum stress by activating transcription of genes involved in the UPR. Binds DNA on the 5'-CCAC[GA]-3'half of the ER stress response element (ERSE) (5'-CCAAT-N(9)-CCAC[GA]-3') and of ERSE II (5'-ATTGG-N-CCACG-3'). Binding to ERSE requires binding of NF-Y to ERSE. Could also be involved in activation of transcription by the serum response factor. May play a role in foveal development and cone function in the retina. The protein is Cyclic AMP-dependent transcription factor ATF-6 alpha (Atf6) of Rattus norvegicus (Rat).